The chain runs to 383 residues: uncharacterized protein (383 aa).

The helical transmembrane segment at 6–26 (LFLFSCLYFIGGNLKALVLGI) threads the bilayer. The ATP-grasp domain occupies 131–303 (YKKLKNLGFN…LAMVLLNNKY (173 aa)).

It is found in the membrane. This is an uncharacterized protein from Methanocaldococcus jannaschii (strain ATCC 43067 / DSM 2661 / JAL-1 / JCM 10045 / NBRC 100440) (Methanococcus jannaschii).